Consider the following 231-residue polypeptide: NADH-quinone oxidoreductase subunit C (231 aa).

This sequence belongs to the complex I 30 kDa subunit family. As to quaternary structure, NDH-1 is composed of 14 different subunits. Subunits NuoB, C, D, E, F, and G constitute the peripheral sector of the complex.

The protein localises to the cell membrane. It carries out the reaction a quinone + NADH + 5 H(+)(in) = a quinol + NAD(+) + 4 H(+)(out). In terms of biological role, NDH-1 shuttles electrons from NADH, via FMN and iron-sulfur (Fe-S) centers, to quinones in the respiratory chain. The immediate electron acceptor for the enzyme in this species is believed to be a menaquinone. Couples the redox reaction to proton translocation (for every two electrons transferred, four hydrogen ions are translocated across the cytoplasmic membrane), and thus conserves the redox energy in a proton gradient. In Mycobacterium sp. (strain JLS), this protein is NADH-quinone oxidoreductase subunit C.